Reading from the N-terminus, the 41-residue chain is Pathogenesis-related protein (41 aa).

Belongs to the CRISP family.

Its function is as follows. Probably involved in the defense reaction of plants against pathogens. This is Pathogenesis-related protein from Cucumis melo (Muskmelon).